The primary structure comprises 401 residues: ATP-dependent RNA helicase eIF4A (401 aa).

The Q motif signature appears at 28 to 56 (DNFDDMKLKGELLRGIYAYGFERPSAIQQ). One can recognise a Helicase ATP-binding domain in the interval 59-229 (IMPIVTGRDC…KKFMRDPIRI (171 aa)). 72–79 (AQSGTGKT) serves as a coordination point for ATP. The DEAD box motif lies at 177-180 (DEAD). The region spanning 240–401 (GIRQFYINVE…EMPLNVADLI (162 aa)) is the Helicase C-terminal domain.

Belongs to the DEAD box helicase family. eIF4A subfamily. In terms of assembly, component of the eIF4F complex, which composition varies with external and internal environmental conditions. It is composed of at least eIF4A, eIF4E and eIF4G.

It is found in the cytoplasm. It carries out the reaction ATP + H2O = ADP + phosphate + H(+). Functionally, ATP-dependent RNA helicase which is a subunit of the eIF4F complex involved in cap recognition and is required for mRNA binding to ribosome. In the current model of translation initiation, eIF4A unwinds RNA secondary structures in the 5'-UTR of mRNAs which is necessary to allow efficient binding of the small ribosomal subunit, and subsequent scanning for the initiator codon. The sequence is that of ATP-dependent RNA helicase eIF4A (TIF1) from Cryptococcus neoformans var. neoformans serotype D (strain B-3501A) (Filobasidiella neoformans).